The primary structure comprises 263 residues: Small ribosomal subunit protein bS1c (263 aa).

S1 motif domains are found at residues 27–96, 114–178, and 192–260; these read GDIV…LSIR, DSLL…LSHR, and GNII…LSMK.

This sequence belongs to the bacterial ribosomal protein bS1 family.

It is found in the plastid. Its subcellular location is the chloroplast. The polypeptide is Small ribosomal subunit protein bS1c (rps1) (Porphyra purpurea (Red seaweed)).